The sequence spans 332 residues: Capsular polysaccharide phosphotransferase WcwK (332 aa).

Belongs to the stealth family.

This Streptococcus pneumoniae protein is Capsular polysaccharide phosphotransferase WcwK (wcwK).